Reading from the N-terminus, the 94-residue chain is Aspartyl/glutamyl-tRNA(Asn/Gln) amidotransferase subunit C (94 aa).

This sequence belongs to the GatC family. Heterotrimer of A, B and C subunits.

The enzyme catalyses L-glutamyl-tRNA(Gln) + L-glutamine + ATP + H2O = L-glutaminyl-tRNA(Gln) + L-glutamate + ADP + phosphate + H(+). The catalysed reaction is L-aspartyl-tRNA(Asn) + L-glutamine + ATP + H2O = L-asparaginyl-tRNA(Asn) + L-glutamate + ADP + phosphate + 2 H(+). Its function is as follows. Allows the formation of correctly charged Asn-tRNA(Asn) or Gln-tRNA(Gln) through the transamidation of misacylated Asp-tRNA(Asn) or Glu-tRNA(Gln) in organisms which lack either or both of asparaginyl-tRNA or glutaminyl-tRNA synthetases. The reaction takes place in the presence of glutamine and ATP through an activated phospho-Asp-tRNA(Asn) or phospho-Glu-tRNA(Gln). In Campylobacter jejuni subsp. doylei (strain ATCC BAA-1458 / RM4099 / 269.97), this protein is Aspartyl/glutamyl-tRNA(Asn/Gln) amidotransferase subunit C.